The following is a 381-amino-acid chain: L-lactate dehydrogenase (381 aa).

The region spanning 1-380 (MIISSASDYR…KPEALVDLSK (380 aa)) is the FMN hydroxy acid dehydrogenase domain. Tyrosine 24 contributes to the substrate binding site. 2 residues coordinate FMN: serine 106 and glutamine 127. Tyrosine 129 contacts substrate. Threonine 155 is a binding site for FMN. Arginine 164 is a substrate binding site. Lysine 251 provides a ligand contact to FMN. Residue histidine 275 is the Proton acceptor of the active site. Position 278 (arginine 278) interacts with substrate. 306–330 (DSGIRNGLDIVRMLALGADATMLGR) provides a ligand contact to FMN.

The protein belongs to the FMN-dependent alpha-hydroxy acid dehydrogenase family. Requires FMN as cofactor.

The protein localises to the cell inner membrane. The enzyme catalyses (S)-lactate + A = pyruvate + AH2. Catalyzes the conversion of L-lactate to pyruvate. Is coupled to the respiratory chain. The protein is L-lactate dehydrogenase of Haemophilus influenzae (strain PittEE).